The following is a 396-amino-acid chain: MIISAASDYRAAAQRTLPPFLFHYIDGGAYAEYTLRRNVEDLSQVALRQRVLKNMSDLSLETTLFNETLSMPVALAPVGLCGMYARRGEVQAAAAADAKGIPFTLSTVSVCPIEEVAPTIQRPMWFQLYVLRDRGFMRNALERAKAAGCSTLVFTVDMPTPGARYRDAHSGMSGPNAAMRRYWQAVMHPKWAWDVGLNGRPHDLGNISAYLGKPTGLEDYIGWLANNFDPSISWKDLEWIREFWDGPMVIKGILDPEDARDAVRFGADGIVVSNHGGRQLDGVLSSARALPAIADAVKGDIAILADSGIRNGLDVVRMIALGADTVLLGRAYLYALATAGKAGVANLLDLIEKEMKVAMTLTGAKSISEISGDSLVQELGRSLPAALAPMSKGDAA.

The FMN hydroxy acid dehydrogenase domain maps to 1–380; it reads MIISAASDYR…SGDSLVQELG (380 aa). Substrate is bound at residue Tyr-24. The FMN site is built by Ser-106 and Gln-127. Tyr-129 lines the substrate pocket. An FMN-binding site is contributed by Thr-155. Substrate is bound at residue Arg-164. Lys-251 is an FMN binding site. Residue His-275 is the Proton acceptor of the active site. Arg-278 contacts substrate. 306 to 330 contributes to the FMN binding site; that stretch reads DSGIRNGLDVVRMIALGADTVLLGR.

It belongs to the FMN-dependent alpha-hydroxy acid dehydrogenase family. FMN serves as cofactor.

The protein localises to the cell inner membrane. The catalysed reaction is (S)-lactate + A = pyruvate + AH2. Catalyzes the conversion of L-lactate to pyruvate. Is coupled to the respiratory chain. The protein is L-lactate dehydrogenase of Salmonella heidelberg (strain SL476).